Reading from the N-terminus, the 260-residue chain is Methylphosphonate hydroxylase (260 aa).

Lys107 serves as a coordination point for 2-oxoglutarate. His117, Asp119, and His195 together coordinate Fe cation.

Belongs to the PhyH family. Fe(2+) serves as cofactor.

It carries out the reaction methylphosphonate + 2-oxoglutarate + O2 = hydroxymethylphosphonate + succinate + CO2. In terms of biological role, part of an oxidative pathway for utilization of methylphosphonic acid as a phosphate source. Catalyzes the conversion of methylphosphonic acid to hydroxymethylphosphonic acid. Is specific for the hydroxylation of methylphosphonate. The chain is Methylphosphonate hydroxylase from Gimesia maris (strain ATCC 29201 / DSM 8797 / 534-30) (Planctomyces maris).